A 199-amino-acid chain; its full sequence is Imidazoleglycerol-phosphate dehydratase (199 aa).

It belongs to the imidazoleglycerol-phosphate dehydratase family.

Its subcellular location is the cytoplasm. It carries out the reaction D-erythro-1-(imidazol-4-yl)glycerol 3-phosphate = 3-(imidazol-4-yl)-2-oxopropyl phosphate + H2O. It functions in the pathway amino-acid biosynthesis; L-histidine biosynthesis; L-histidine from 5-phospho-alpha-D-ribose 1-diphosphate: step 6/9. The protein is Imidazoleglycerol-phosphate dehydratase of Bifidobacterium longum (strain NCC 2705).